A 292-amino-acid chain; its full sequence is Cytidine deaminase (292 aa).

2 consecutive CMP/dCMP-type deaminase domains span residues 47 to 167 (TTLK…FGPK) and 186 to 292 (DHQD…YYSL). 88 to 90 (NQE) is a binding site for substrate. His-101 provides a ligand contact to Zn(2+). Glu-103 functions as the Proton donor in the catalytic mechanism. Positions 128 and 131 each coordinate Zn(2+).

It belongs to the cytidine and deoxycytidylate deaminase family. As to quaternary structure, homodimer. The cofactor is Zn(2+).

It carries out the reaction cytidine + H2O + H(+) = uridine + NH4(+). The enzyme catalyses 2'-deoxycytidine + H2O + H(+) = 2'-deoxyuridine + NH4(+). Its function is as follows. This enzyme scavenges exogenous and endogenous cytidine and 2'-deoxycytidine for UMP synthesis. The sequence is that of Cytidine deaminase from Haemophilus influenzae (strain ATCC 51907 / DSM 11121 / KW20 / Rd).